The primary structure comprises 41 residues: Large ribosomal subunit protein bL36 (41 aa).

This sequence belongs to the bacterial ribosomal protein bL36 family.

This chain is Large ribosomal subunit protein bL36, found in Xanthomonas axonopodis pv. citri (strain 306).